Consider the following 50-residue polypeptide: Parvalbumin (50 aa).

The EF-hand domain occupies 38-50; the sequence is KTHEQVKKVFNIL.

The protein belongs to the parvalbumin family.

In terms of biological role, probably regulates the activity of the caudal neurosecretory system. Binds two calcium ions. This Scyliorhinus canicula (Small-spotted catshark) protein is Parvalbumin.